We begin with the raw amino-acid sequence, 411 residues long: Na(+)-translocating NADH-quinone reductase subunit B (411 aa).

3 helical membrane passes run 56–76 (MMITVFLALFPAIFYGMYNVG), 120–140 (ALGAIFFLPIYLVVFTVCTIW), and 166–186 (IVPPTLPLWQAALGITFGIIV). The residue at position 233 (T233) is an FMN phosphoryl threonine. The next 5 membrane-spanning stretches (helical) occupy residues 272–292 (VSTLAILIGGAVIVFTRIAAW), 294–314 (IIAGVMIGMIATSTLFNLIGS), 319–339 (MFSMPWHWHFVLGGFALGMVF), 348–368 (SFTNTGKWWYGALIGVMAVLI), and 378–398 (GMMLAILFANLFAPIFDYIVV).

This sequence belongs to the NqrB/RnfD family. In terms of assembly, composed of six subunits; NqrA, NqrB, NqrC, NqrD, NqrE and NqrF. FMN serves as cofactor.

It localises to the cell inner membrane. The enzyme catalyses a ubiquinone + n Na(+)(in) + NADH + H(+) = a ubiquinol + n Na(+)(out) + NAD(+). Its function is as follows. NQR complex catalyzes the reduction of ubiquinone-1 to ubiquinol by two successive reactions, coupled with the transport of Na(+) ions from the cytoplasm to the periplasm. NqrA to NqrE are probably involved in the second step, the conversion of ubisemiquinone to ubiquinol. The polypeptide is Na(+)-translocating NADH-quinone reductase subunit B (Haemophilus influenzae (strain 86-028NP)).